The primary structure comprises 79 residues: Cyclin-dependent kinases regulatory subunit 1 (79 aa).

Serine 2 is modified (N-acetylserine).

The protein belongs to the CKS family. As to quaternary structure, forms a homohexamer that can probably bind six kinase subunits.

Binds to the catalytic subunit of the cyclin dependent kinases and is essential for their biological function. The sequence is that of Cyclin-dependent kinases regulatory subunit 1 (CKS1B) from Bos taurus (Bovine).